The sequence spans 431 residues: Elongation factor 1-gamma (431 aa).

The GST N-terminal domain maps to 2–84; that stretch reads VKGTLYTYPE…LLANEQLRGG (83 aa). The 127-residue stretch at 86–212 folds into the GST C-terminal domain; that stretch reads CPFVQAQVQQ…YKLCEKALVF (127 aa). Residues 223–261 form a disordered region; sequence KTGAAKPQQQAQQQKQEKKPKEKKEAPKKAAEPAEELDA. The segment covering 226–236 has biased composition (low complexity); sequence AAKPQQQAQQQ. Residues 237–254 are compositionally biased toward basic and acidic residues; it reads KQEKKPKEKKEAPKKAAE. The region spanning 272-431 is the EF-1-gamma C-terminal domain; the sequence is SKDPFDALPK…RKFNQGKIFK (160 aa). Ser294 is subject to Phosphoserine.

As to quaternary structure, interacts with microtubules. May interact with BicDR; the interaction is probably indirect. Interacts (via C-terminus) with Doa; the interaction is probably direct, is transient and leads to phosphorylation of eEF1gamma by Doa. EF-1 is composed of four subunits: alpha, beta, delta, and gamma. Post-translationally, phosphorylated on Ser-294 by LAMMER kinases, including Doa. Phosphorylation on Ser-294 by Doa is required for negative regulation of microtubule-based transport.

The protein localises to the cytoplasm. Its subcellular location is the nucleus. It localises to the cytoskeleton. Functionally, microtubule binding protein involved in regulation of microtubule-based transport. Probably plays a role in anchoring the EF-1 complex to other cellular components. Probably involved in formation and/or development of mechanosensory organs during metamorphosis. Required for cellular and organismal viability. Not essential for the innate immune response to bacterial infection. In Drosophila melanogaster (Fruit fly), this protein is Elongation factor 1-gamma.